Reading from the N-terminus, the 497-residue chain is Endoglucanase 17 (497 aa).

A signal peptide spans 1–21 (MAAAGGAVLLLVLATATSVTG). Residue aspartate 77 is the Nucleophile of the active site. The active site involves histidine 406. An N-linked (GlcNAc...) asparagine glycan is attached at asparagine 451. Active-site residues include aspartate 458 and glutamate 467.

This sequence belongs to the glycosyl hydrolase 9 (cellulase E) family.

The protein localises to the secreted. It carries out the reaction Endohydrolysis of (1-&gt;4)-beta-D-glucosidic linkages in cellulose, lichenin and cereal beta-D-glucans.. This is Endoglucanase 17 (GLU13) from Oryza sativa subsp. japonica (Rice).